We begin with the raw amino-acid sequence, 171 residues long: Spiderine-2b (171 aa).

The N-terminal stretch at 1–18 is a signal peptide; sequence MKFALVLLGFCAFYLVNA. The propeptide at 19–58 is removed in mature form; sequence TGDLETELEASDLQELQEALDLIAETPLESLEAEELEEAR. The interval 59-104 is linear cationic cytotoxin domain; the sequence is KFKFPKINWGKLASKAKDVYKKGQKLAKNKNVKKALKYGKQLAENL. Residues 118–171 enclose the Oxytoxin-type inhibitor cystine knot (ICK) domain; sequence NNKCWAIGTRCTDDCDCCPEHHCHCPAKSWTFGLIPCSCQVTESDKVNKCPPAE. 5 disulfides stabilise this stretch: Cys121–Cys135, Cys128–Cys140, Cys132–Cys167, Cys134–Cys156, and Cys142–Cys154.

The protein belongs to the spiderine family. Cationic/spiderine subfamily. As to expression, expressed by the venom gland.

It localises to the secreted. Functionally, has antimicrobial, insecticidal, cytolytic and cytotoxic activity. The sequence is that of Spiderine-2b from Oxyopes takobius (Lynx spider).